The following is a 331-amino-acid chain: Low affinity immunoglobulin epsilon Fc receptor (331 aa).

Residues Met1–Gly23 are Cytoplasmic-facing. 2 S-palmitoyl cysteine lipidation sites follow: Cys17 and Cys18. Residues Thr24–Trp49 form a helical; Signal-anchor for type II membrane protein membrane-spanning segment. Residues Glu50 to Pro331 lie on the Extracellular side of the membrane. The N-linked (GlcNAc...) asparagine glycan is linked to Asn65. Repeats lie at residues Lys71–Ser91, Gln92–Ser112, and Gln113–Ser133. A glycan (N-linked (GlcNAc...) asparagine) is linked at Asn114. 4 cysteine pairs are disulfide-bonded: Cys183–Cys311, Cys186–Cys197, Cys214–Cys305, and Cys282–Cys296. One can recognise a C-type lectin domain in the interval Ile185–Ser298. Ca(2+) is bound by residues Glu272, Asn292, and Asp293. O-linked (Xyl...) (chondroitin sulfate) serine glycosylation is present at Ser319.

As to quaternary structure, homotrimer. Interacts (via C-type lectin domain) with IGHE (via CH3 region); this interaction regulates IgE homeostasis. Interacts (via C-terminus) with CR2/CD21 (via Sushi domain 1 and 2). In terms of processing, N- and O-glycosylated.

It is found in the cell membrane. The protein resides in the secreted. Low-affinity receptor for immunoglobulin E (IgE) and CR2/CD21. Has essential roles in the regulation of IgE production and in the differentiation of B cells. On B cells, initiates IgE-dependent antigen uptake and presentation to T cells. On macrophages, upon IgE binding and antigen cross-linking induces intracellular killing of parasites through activation of L-Arginine-nitric oxide pathway. This Mus musculus (Mouse) protein is Low affinity immunoglobulin epsilon Fc receptor (Fcer2).